A 173-amino-acid polypeptide reads, in one-letter code: Ribosome maturation factor RimM (173 aa).

A PRC barrel domain is found at 98 to 171; the sequence is DDQYYYDEII…LITIDALEGL (74 aa).

This sequence belongs to the RimM family. As to quaternary structure, binds ribosomal protein uS19.

It localises to the cytoplasm. In terms of biological role, an accessory protein needed during the final step in the assembly of 30S ribosomal subunit, possibly for assembly of the head region. Essential for efficient processing of 16S rRNA. May be needed both before and after RbfA during the maturation of 16S rRNA. It has affinity for free ribosomal 30S subunits but not for 70S ribosomes. This chain is Ribosome maturation factor RimM, found in Leuconostoc mesenteroides subsp. mesenteroides (strain ATCC 8293 / DSM 20343 / BCRC 11652 / CCM 1803 / JCM 6124 / NCDO 523 / NBRC 100496 / NCIMB 8023 / NCTC 12954 / NRRL B-1118 / 37Y).